The chain runs to 89 residues: Small ribosomal subunit protein uS14 (89 aa).

It belongs to the universal ribosomal protein uS14 family. As to quaternary structure, part of the 30S ribosomal subunit. Contacts proteins S3 and S10.

Its function is as follows. Binds 16S rRNA, required for the assembly of 30S particles and may also be responsible for determining the conformation of the 16S rRNA at the A site. The protein is Small ribosomal subunit protein uS14 of Onion yellows phytoplasma (strain OY-M).